The sequence spans 471 residues: Heat shock 70 kDa protein 13 (471 aa).

A signal peptide spans 1 to 22 (MAGEMTILGSAVLTLLLAGYLA). Asn184 is a glycosylation site (N-linked (GlcNAc...) asparagine). Positions 316-339 (NDSQKPQNADSKLPEDQLTPGDGH) are disordered.

The protein belongs to the heat shock protein 70 family. Binds UBQLN2.

The protein resides in the microsome. The protein localises to the endoplasmic reticulum. Has peptide-independent ATPase activity. In Rattus norvegicus (Rat), this protein is Heat shock 70 kDa protein 13 (Hspa13).